A 266-amino-acid chain; its full sequence is 3-methyl-2-oxobutanoate hydroxymethyltransferase (266 aa).

Mg(2+)-binding residues include Asp-45 and Asp-84. 3-methyl-2-oxobutanoate contacts are provided by residues 45–46 (DS), Asp-84, and Lys-112. Position 114 (Glu-114) interacts with Mg(2+). The active-site Proton acceptor is Glu-181.

Belongs to the PanB family. As to quaternary structure, homodecamer; pentamer of dimers. Mg(2+) is required as a cofactor.

It localises to the cytoplasm. It carries out the reaction 3-methyl-2-oxobutanoate + (6R)-5,10-methylene-5,6,7,8-tetrahydrofolate + H2O = 2-dehydropantoate + (6S)-5,6,7,8-tetrahydrofolate. It participates in cofactor biosynthesis; (R)-pantothenate biosynthesis; (R)-pantoate from 3-methyl-2-oxobutanoate: step 1/2. Its function is as follows. Catalyzes the reversible reaction in which hydroxymethyl group from 5,10-methylenetetrahydrofolate is transferred onto alpha-ketoisovalerate to form ketopantoate. The polypeptide is 3-methyl-2-oxobutanoate hydroxymethyltransferase (Stutzerimonas stutzeri (strain A1501) (Pseudomonas stutzeri)).